Consider the following 161-residue polypeptide: Endoribonuclease YbeY (161 aa).

Residues His120, His124, and Asp130 each contribute to the Zn(2+) site.

The protein belongs to the endoribonuclease YbeY family. Requires Zn(2+) as cofactor.

It localises to the cytoplasm. Functionally, single strand-specific metallo-endoribonuclease involved in late-stage 70S ribosome quality control and in maturation of the 3' terminus of the 16S rRNA. The polypeptide is Endoribonuclease YbeY (Chlamydia muridarum (strain MoPn / Nigg)).